A 256-amino-acid polypeptide reads, in one-letter code: 6-carboxyhexanoate--CoA ligase (256 aa).

It belongs to the BioW family. As to quaternary structure, homodimer. Requires Mg(2+) as cofactor.

The catalysed reaction is heptanedioate + ATP + CoA = 6-carboxyhexanoyl-CoA + AMP + diphosphate. It functions in the pathway metabolic intermediate metabolism; pimeloyl-CoA biosynthesis; pimeloyl-CoA from pimelate: step 1/1. Catalyzes the transformation of pimelate into pimeloyl-CoA with concomitant hydrolysis of ATP to AMP. In Methanobrevibacter ruminantium (strain ATCC 35063 / DSM 1093 / JCM 13430 / OCM 146 / M1) (Methanobacterium ruminantium), this protein is 6-carboxyhexanoate--CoA ligase.